Here is a 73-residue protein sequence, read N- to C-terminus: Translation initiation factor IF-1 (73 aa).

One can recognise an S1-like domain in the interval 1 to 73 (MSKKKDVIEM…TRGRITYRYK (73 aa)).

This sequence belongs to the IF-1 family. As to quaternary structure, component of the 30S ribosomal translation pre-initiation complex which assembles on the 30S ribosome in the order IF-2 and IF-3, IF-1 and N-formylmethionyl-tRNA(fMet); mRNA recruitment can occur at any time during PIC assembly.

It localises to the cytoplasm. One of the essential components for the initiation of protein synthesis. Stabilizes the binding of IF-2 and IF-3 on the 30S subunit to which N-formylmethionyl-tRNA(fMet) subsequently binds. Helps modulate mRNA selection, yielding the 30S pre-initiation complex (PIC). Upon addition of the 50S ribosomal subunit IF-1, IF-2 and IF-3 are released leaving the mature 70S translation initiation complex. The chain is Translation initiation factor IF-1 from Chloroflexus aurantiacus (strain ATCC 29366 / DSM 635 / J-10-fl).